The sequence spans 358 residues: Aminomethyltransferase (358 aa).

The protein belongs to the GcvT family. As to quaternary structure, the glycine cleavage system is composed of four proteins: P, T, L and H.

The enzyme catalyses N(6)-[(R)-S(8)-aminomethyldihydrolipoyl]-L-lysyl-[protein] + (6S)-5,6,7,8-tetrahydrofolate = N(6)-[(R)-dihydrolipoyl]-L-lysyl-[protein] + (6R)-5,10-methylene-5,6,7,8-tetrahydrofolate + NH4(+). Its function is as follows. The glycine cleavage system catalyzes the degradation of glycine. This is Aminomethyltransferase from Francisella tularensis subsp. tularensis (strain WY96-3418).